The chain runs to 347 residues: N-acetyl-gamma-glutamyl-phosphate reductase (347 aa).

Cysteine 152 is a catalytic residue.

It belongs to the NAGSA dehydrogenase family. Type 1 subfamily.

It localises to the cytoplasm. The enzyme catalyses N-acetyl-L-glutamate 5-semialdehyde + phosphate + NADP(+) = N-acetyl-L-glutamyl 5-phosphate + NADPH + H(+). It functions in the pathway amino-acid biosynthesis; L-arginine biosynthesis; N(2)-acetyl-L-ornithine from L-glutamate: step 3/4. Catalyzes the NADPH-dependent reduction of N-acetyl-5-glutamyl phosphate to yield N-acetyl-L-glutamate 5-semialdehyde. This chain is N-acetyl-gamma-glutamyl-phosphate reductase, found in Neisseria meningitidis serogroup C / serotype 2a (strain ATCC 700532 / DSM 15464 / FAM18).